The primary structure comprises 123 residues: Large ribosomal subunit protein uL14 (123 aa).

This sequence belongs to the universal ribosomal protein uL14 family. Part of the 50S ribosomal subunit. Forms a cluster with proteins L3 and L19. In the 70S ribosome, L14 and L19 interact and together make contacts with the 16S rRNA in bridges B5 and B8.

Its function is as follows. Binds to 23S rRNA. Forms part of two intersubunit bridges in the 70S ribosome. The chain is Large ribosomal subunit protein uL14 from Proteus mirabilis (strain HI4320).